A 352-amino-acid polypeptide reads, in one-letter code: S-adenosylmethionine:tRNA ribosyltransferase-isomerase (352 aa).

Belongs to the QueA family. Monomer.

The protein localises to the cytoplasm. It carries out the reaction 7-aminomethyl-7-carbaguanosine(34) in tRNA + S-adenosyl-L-methionine = epoxyqueuosine(34) in tRNA + adenine + L-methionine + 2 H(+). Its pathway is tRNA modification; tRNA-queuosine biosynthesis. In terms of biological role, transfers and isomerizes the ribose moiety from AdoMet to the 7-aminomethyl group of 7-deazaguanine (preQ1-tRNA) to give epoxyqueuosine (oQ-tRNA). The chain is S-adenosylmethionine:tRNA ribosyltransferase-isomerase from Dechloromonas aromatica (strain RCB).